The chain runs to 238 residues: MGRKWANIVAKKTAKDGATSKVYAKFGVEIYAAAKQGEPDPESNSALKFVIERAKQAQVPKHVIDKAIDKAKGGGDETFVQGRYEGFGPNGSMVIAETLTSNVNRTIANIRTIFNKKGGNIGAAGAVSYMFDNTGVIVFKGTDPDHIFEILLDAEVDVRDVTEEEGNIVIYTEATDLHKGIAALKAAGITEFSTTELEMIAQSEVELSPEDLEIFEGLVDALEDDDDVQKVYHNVANL.

The protein belongs to the TACO1 family. YeeN subfamily.

Its subcellular location is the cytoplasm. The protein is Probable transcriptional regulatory protein YeeN of Salmonella choleraesuis (strain SC-B67).